We begin with the raw amino-acid sequence, 240 residues long: Membrane-spanning 4-domains subfamily A member 7 (240 aa).

Over 1-47 the chain is Cytoplasmic; sequence MLLQSQTMGVSHSFTPKGITIPQREKPGHMYQNEDYLQNGLPTETTV. Residues 48-68 traverse the membrane as a helical segment; it reads LGTVQILCCLLISSLGAILVF. Topologically, residues 69–83 are extracellular; the sequence is APYPSHFNPAISTTL. A helical membrane pass occupies residues 84–104; that stretch reads MSGYPFLGALCFGITGSLSII. Residues 105–121 lie on the Cytoplasmic side of the membrane; the sequence is SGKQSTKPFDLSSLTSN. The helical transmembrane segment at 122–142 threads the bilayer; the sequence is AVSSVTAGAGLFLLADSMVAL. Residues 143 to 178 lie on the Extracellular side of the membrane; that stretch reads RTASQHCGSEMDYLSSLPYSEYYYPIYEIKDCLLTS. The chain crosses the membrane as a helical span at residues 179 to 199; the sequence is VSLTGVLVVMLIFTVLELLLA. Residues 200–240 lie on the Cytoplasmic side of the membrane; the sequence is AYSSVFWWKQLYSNNPGSSFSSTQSQDHIQQVKKSSSRSWI. The tract at residues 218 to 240 is disordered; that stretch reads SFSSTQSQDHIQQVKKSSSRSWI.

It belongs to the MS4A family. As to expression, ubiquitous expression in normal tissues. Expression is more elevated in adult liver, lung, spleen, and heart than in their fetal counterparts, and is higher in normal tissues than in the cancerous tissue or cell lines. Low levels of expression were detected in the promonocytic stage, whereas high levels of expression were detected in mature monocytes.

Its subcellular location is the membrane. In terms of biological role, may be involved in signal transduction as a component of a multimeric receptor complex. This Homo sapiens (Human) protein is Membrane-spanning 4-domains subfamily A member 7 (MS4A7).